The chain runs to 275 residues: Epidermal growth factor-like protein 7 (275 aa).

The N-terminal stretch at M1 to T21 is a signal peptide. One can recognise an EMI domain in the interval S28–A105. Disulfide bonds link C32-C90, C57-C63, C89-C103, C108-C118, C112-C124, C126-C135, C142-C153, and C149-C162. In terms of domain architecture, EGF-like 1 spans G104–Q136. The short motif at Q131–D133 is the Cell attachment site element. Positions D138 to L178 constitute an EGF-like 2; calcium-binding domain. Positions D173–G193 are disordered. Positions S196–L220 form a coiled coil.

In terms of assembly, interacts with ITGAV/ITGB3 in an RGD-dependent manner, increasing endothelial cell's motility. In terms of tissue distribution, expressed specifically by endothelial cells of the highly vascularized organs heart, lung and kidney.

Its subcellular location is the secreted. The protein resides in the extracellular space. Its function is as follows. Regulates vascular tubulogenesis in vivo. Inhibits platelet-derived growth factor (PDGF)-BB-induced smooth muscle cell migration and promotes endothelial cell adhesion to the extracellular matrix and angiogenesis. This chain is Epidermal growth factor-like protein 7 (Egfl7), found in Mus musculus (Mouse).